The sequence spans 122 residues: Large ribosomal subunit protein uL14 (122 aa).

This sequence belongs to the universal ribosomal protein uL14 family. As to quaternary structure, part of the 50S ribosomal subunit. Forms a cluster with proteins L3 and L19. In the 70S ribosome, L14 and L19 interact and together make contacts with the 16S rRNA in bridges B5 and B8.

Functionally, binds to 23S rRNA. Forms part of two intersubunit bridges in the 70S ribosome. The chain is Large ribosomal subunit protein uL14 from Desulforamulus reducens (strain ATCC BAA-1160 / DSM 100696 / MI-1) (Desulfotomaculum reducens).